A 525-amino-acid polypeptide reads, in one-letter code: Peptide chain release factor 3 (525 aa).

Residues 8-276 (AMRRTFAIIS…AFVKEAPPPQ (269 aa)) enclose the tr-type G domain. Residues 17 to 24 (SHPDAGKT), 85 to 89 (DTPGH), and 139 to 142 (NKMD) contribute to the GTP site.

This sequence belongs to the TRAFAC class translation factor GTPase superfamily. Classic translation factor GTPase family. PrfC subfamily.

The protein resides in the cytoplasm. Its function is as follows. Increases the formation of ribosomal termination complexes and stimulates activities of RF-1 and RF-2. It binds guanine nucleotides and has strong preference for UGA stop codons. It may interact directly with the ribosome. The stimulation of RF-1 and RF-2 is significantly reduced by GTP and GDP, but not by GMP. The protein is Peptide chain release factor 3 of Coxiella burnetii (strain CbuK_Q154) (Coxiella burnetii (strain Q154)).